The chain runs to 201 residues: GTP cyclohydrolase 1 (201 aa).

Residues Cys-90, His-93, and Cys-163 each coordinate Zn(2+).

Belongs to the GTP cyclohydrolase I family. As to quaternary structure, toroid-shaped homodecamer, composed of two pentamers of five dimers.

The enzyme catalyses GTP + H2O = 7,8-dihydroneopterin 3'-triphosphate + formate + H(+). The protein operates within cofactor biosynthesis; 7,8-dihydroneopterin triphosphate biosynthesis; 7,8-dihydroneopterin triphosphate from GTP: step 1/1. This Streptomyces avermitilis (strain ATCC 31267 / DSM 46492 / JCM 5070 / NBRC 14893 / NCIMB 12804 / NRRL 8165 / MA-4680) protein is GTP cyclohydrolase 1.